A 465-amino-acid chain; its full sequence is Chaperone protein dnaJ C76, chloroplastic (465 aa).

Residues 1-38 (MTPAIFSPTTLPPSTATWPCSTSQKLITVRSPLKFKCR) constitute a chloroplast transit peptide. Residues 50–113 (DLYDLLGIDR…ISRQAYDKEQ (64 aa)) form the J domain. Positions 346–385 (AALPSSGNNNGSKASSNPQVTRKTFPSEEKPTSRRENRRQ) are disordered. The segment covering 350-362 (SSGNNNGSKASSN) has biased composition (low complexity). Positions 370 to 384 (FPSEEKPTSRRENRR) are enriched in basic and acidic residues.

Belongs to the DnaJ family. Expressed in roots, exclusively in the stele.

It localises to the plastid. The protein resides in the chloroplast. May function together with HSC70 chaperone to assist protein folding and prevent protein aggregation during salt stress in the chloroplast. Involved in root development. Required for the position-dependent cell fate determination during root hair development. The protein is Chaperone protein dnaJ C76, chloroplastic of Arabidopsis thaliana (Mouse-ear cress).